A 39-amino-acid polypeptide reads, in one-letter code: Photosystem II reaction center protein L (39 aa).

A helical membrane pass occupies residues Ser-18–Phe-38.

This sequence belongs to the PsbL family. In terms of assembly, PSII is composed of 1 copy each of membrane proteins PsbA, PsbB, PsbC, PsbD, PsbE, PsbF, PsbH, PsbI, PsbJ, PsbK, PsbL, PsbM, PsbT, PsbX, PsbY, PsbZ, Psb30/Ycf12, peripheral proteins PsbO, CyanoQ (PsbQ), PsbU, PsbV and a large number of cofactors. It forms dimeric complexes.

The protein resides in the cellular thylakoid membrane. Functionally, one of the components of the core complex of photosystem II (PSII). PSII is a light-driven water:plastoquinone oxidoreductase that uses light energy to abstract electrons from H(2)O, generating O(2) and a proton gradient subsequently used for ATP formation. It consists of a core antenna complex that captures photons, and an electron transfer chain that converts photonic excitation into a charge separation. This subunit is found at the monomer-monomer interface and is required for correct PSII assembly and/or dimerization. This is Photosystem II reaction center protein L from Trichormus variabilis (strain ATCC 29413 / PCC 7937) (Anabaena variabilis).